The chain runs to 397 residues: Purine nucleoside transport protein NupG (397 aa).

Helical transmembrane passes span 1-21 (MYFL…FLCS), 32-52 (IITL…TKVG), 62-82 (FFTW…PSVM), 97-117 (IIFI…PWLI), 133-153 (LESF…LAVI), 165-185 (LLTF…GSYL), 187-207 (MVPA…ALII), 242-262 (MLVG…YVAL), 282-302 (IFAY…HDAM), 335-355 (VAVA…GMIY), and 377-397 (LLVS…LFVW).

It belongs to the concentrative nucleoside transporter (CNT) (TC 2.A.41) family.

The protein resides in the cell membrane. Its function is as follows. Involved in the uptake of the purine ribonucleosides inosine and guanosine. The protein is Purine nucleoside transport protein NupG (nupG) of Bacillus subtilis (strain 168).